Consider the following 121-residue polypeptide: Small ribosomal subunit protein uS13 (121 aa).

The disordered stretch occupies residues 91–121 (HRMSLPVRGQRTRTNARTRRGSRKTVAGRKK). The span at 100 to 121 (QRTRTNARTRRGSRKTVAGRKK) shows a compositional bias: basic residues.

It belongs to the universal ribosomal protein uS13 family. Part of the 30S ribosomal subunit. Forms a loose heterodimer with protein S19. Forms two bridges to the 50S subunit in the 70S ribosome.

Its function is as follows. Located at the top of the head of the 30S subunit, it contacts several helices of the 16S rRNA. In the 70S ribosome it contacts the 23S rRNA (bridge B1a) and protein L5 of the 50S subunit (bridge B1b), connecting the 2 subunits; these bridges are implicated in subunit movement. Contacts the tRNAs in the A and P-sites. The polypeptide is Small ribosomal subunit protein uS13 (Prochlorococcus marinus (strain MIT 9312)).